A 145-amino-acid polypeptide reads, in one-letter code: Superoxide dismutase [Mn/Fe] (145 aa).

Positions 10 and 64 each coordinate Fe(3+). Mn(2+)-binding residues include H10 and H64.

The protein belongs to the iron/manganese superoxide dismutase family. Mn(2+) serves as cofactor. Fe(3+) is required as a cofactor.

It catalyses the reaction 2 superoxide + 2 H(+) = H2O2 + O2. Functionally, destroys superoxide anion radicals which are normally produced within the cells and which are toxic to biological systems. Catalyzes the dismutation of superoxide anion radicals into O2 and H2O2 by successive reduction and oxidation of the transition metal ion at the active site. In Streptococcus alactolyticus, this protein is Superoxide dismutase [Mn/Fe] (sodA).